We begin with the raw amino-acid sequence, 308 residues long: Elongation factor Ts (308 aa).

Positions 80–83 (TDFV) are involved in Mg(2+) ion dislocation from EF-Tu.

This sequence belongs to the EF-Ts family.

It localises to the cytoplasm. Associates with the EF-Tu.GDP complex and induces the exchange of GDP to GTP. It remains bound to the aminoacyl-tRNA.EF-Tu.GTP complex up to the GTP hydrolysis stage on the ribosome. The protein is Elongation factor Ts of Methylobacterium radiotolerans (strain ATCC 27329 / DSM 1819 / JCM 2831 / NBRC 15690 / NCIMB 10815 / 0-1).